The chain runs to 108 residues: Iron-sulfur cluster assembly protein CyaY (108 aa).

The protein belongs to the frataxin family.

Functionally, involved in iron-sulfur (Fe-S) cluster assembly. May act as a regulator of Fe-S biogenesis. This is Iron-sulfur cluster assembly protein CyaY from Burkholderia ambifaria (strain MC40-6).